Here is a 487-residue protein sequence, read N- to C-terminus: MGAAENNLEMEGTLEIGMEYRTVSGVAGPLVILEKVKGPKYQEIVNIRLGDGTTRRGQVLEVDGEKAVVQVFEGTSGIDNKYTTVQFTGEVLKTPVSLDMLGRIFNGSGKPIDNGPPILPEAYLDISGSSINPSERTYPEEMIQTGISTIDVMNSIARGQKIPLFSAAGLPHNEIAAQICRQAGLVKRLEKSDNLLEHQEDDNFAIVFAAMGVNMETAQFFKRDFEENGSMERVTLFLNLANDPTIERIITPRIALTTAEYLAYECGKHVLVILTDMSSYADALREVSAAREEVPGRRGYPGYMYTDLATIYERAGRIEGRKGSITQIPILTMPNDDITHPTPDLTGYITEGQIYIDRQLHNRQIYPPINVLPSLSRLMKSAIGEGMTRRDHSDVSNQLYANYAIGKDVQAMKAVVGEEALSSEDLLYLEFLDKFERKFVAQGAYDTRNIFQSLDLAWTLLRIFPRELLHRIPAKTLDQFYSRDTTN.

Position 2 is an N-acetylglycine (glycine 2).

Belongs to the ATPase alpha/beta chains family. As to quaternary structure, V-ATPase is a heteromultimeric enzyme composed of a peripheral catalytic V1 complex (components A to H) attached to an integral membrane V0 proton pore complex (components: a, c, c'', d and e).

It is found in the vacuole membrane. In terms of biological role, non-catalytic subunit of the peripheral V1 complex of vacuolar ATPase. V-ATPase is responsible for acidifying a variety of intracellular compartments in eukaryotic cells. In Arabidopsis thaliana (Mouse-ear cress), this protein is V-type proton ATPase subunit B2 (VHA-B2).